The chain runs to 313 residues: Sororin-like protein 1 (313 aa).

The FGF motif motif lies at phenylalanine 44–phenylalanine 46. Residues alanine 105–glycine 287 are disordered. Residues glutamate 107–alanine 118 are compositionally biased toward polar residues. The span at proline 123–proline 134 shows a compositional bias: pro residues. Low complexity predominate over residues proline 135–leucine 154. Over residues glutamine 155 to proline 170 the composition is skewed to polar residues. Over residues histidine 184–arginine 196 the composition is skewed to basic residues. Residues glutamate 249–alanine 264 are compositionally biased toward basic and acidic residues. The interval lysine 288 to valine 310 is C-terminal Sororin domain.

This sequence belongs to the sororin family. As to quaternary structure, interacts with Pds5 and Psm3.

It localises to the nucleus. Its function is as follows. Regulator of sister chromatid cohesion in mitosis stabilizing cohesin complex association with chromatin. Antagonizes the action of wpl1 which stimulates cohesin dissociation from chromatin. Cohesion ensures that chromosome partitioning is accurate in dividing cells and may play an important role in DNA repair. The polypeptide is Sororin-like protein 1 (Schizosaccharomyces pombe (strain 972 / ATCC 24843) (Fission yeast)).